A 331-amino-acid polypeptide reads, in one-letter code: Probable transcriptional regulatory protein At2g25830 (331 aa).

It belongs to the TACO1 family.

In Arabidopsis thaliana (Mouse-ear cress), this protein is Probable transcriptional regulatory protein At2g25830.